The chain runs to 422 residues: Serine protease HTRA2, mitochondrial (422 aa).

Residues 1–17 (MALRGSHRLEVIFKRCI) constitute a mitochondrion transit peptide. Residues 18–74 (ASPVLHSQAGNRRSSQLAIKGVDPNSNGNSGQYQQNGEHKEKGWRRLVRFFVPFSLG) constitute a propeptide that is removed on maturation. The segment at 28 to 55 (NRRSSQLAIKGVDPNSNGNSGQYQQNGE) is disordered. The segment covering 42–53 (NSNGNSGQYQQN) has biased composition (low complexity). Residues 64–82 (LVRFFVPFSLGAAVSAAII) traverse the membrane as a helical segment. 2 short sequence motifs (IAP-binding) span residues 75–78 (AAVS) and 94–97 (SKMT). Positions 139–302 (SNGSGFIIEQ…IPIDYVKVFL (164 aa)) are serine protease. Residues His-157, Asp-189, and Ser-266 each act as charge relay system in the active site. The PDZ domain occupies 325–410 (MGITMLTLTP…TLDIVILRGV (86 aa)).

The protein belongs to the peptidase S1C family. As to quaternary structure, interacts with th/DIAP1 (via BIR 2 domain).

It is found in the mitochondrion intermembrane space. Its subcellular location is the mitochondrion membrane. It carries out the reaction Cleavage of non-polar aliphatic amino-acids at the P1 position, with a preference for Val, Ile and Met. At the P2 and P3 positions, Arg is selected most strongly with a secondary preference for other hydrophilic residues.. Functionally, serine protease that shows proteolytic activity against a non-specific substrate beta-casein. Promotes or induces cell death either by direct binding to and inhibition of BIRC proteins (also called inhibitor of apoptosis proteins, IAPs), leading to an increase in caspase activity, or by a BIRC inhibition-independent, caspase-independent and serine protease activity-dependent mechanism. Can antagonize antiapoptotic activity of th/Diap1 by directly inducing the degradation of th/Diap1. The polypeptide is Serine protease HTRA2, mitochondrial (Drosophila sechellia (Fruit fly)).